The following is a 487-amino-acid chain: Aromatic-L-amino-acid decarboxylase (487 aa).

The residue at position 1 (Met1) is an N-acetylmethionine. 2 repeat units span residues 58–115 (EDIE…TELE) and 118–178 (MMDW…MQAA). The 2 X approximate tandem repeats stretch occupies residues 58–178 (EDIEKIIMPG…AASPELMQAA (121 aa)). Residue Thr82 coordinates substrate. Pyridoxal 5'-phosphate contacts are provided by Ala148 and Ser149. His192 lines the substrate pocket. Thr246 and Asn300 together coordinate pyridoxal 5'-phosphate. The residue at position 303 (Lys303) is an N6-(pyridoxal phosphate)lysine.

This sequence belongs to the group II decarboxylase family. In terms of assembly, homodimer. It depends on pyridoxal 5'-phosphate as a cofactor.

The catalysed reaction is L-dopa + H(+) = dopamine + CO2. It catalyses the reaction 5-hydroxy-L-tryptophan + H(+) = serotonin + CO2. The protein operates within catecholamine biosynthesis; dopamine biosynthesis; dopamine from L-tyrosine: step 2/2. Catalyzes the decarboxylation of L-3,4-dihydroxyphenylalanine (DOPA) to dopamine and L-5-hydroxytryptophan to serotonin. The polypeptide is Aromatic-L-amino-acid decarboxylase (DDC) (Bos taurus (Bovine)).